The sequence spans 459 residues: Cysteine--tRNA ligase (459 aa).

Residue C28 coordinates Zn(2+). Residues 30 to 40 (VTVYDLCHIGH) carry the 'HIGH' region motif. Zn(2+)-binding residues include C209, H234, and E238. Residues 266–270 (KMSKS) carry the 'KMSKS' region motif. An ATP-binding site is contributed by K269.

Belongs to the class-I aminoacyl-tRNA synthetase family. Monomer. Zn(2+) serves as cofactor.

It localises to the cytoplasm. The enzyme catalyses tRNA(Cys) + L-cysteine + ATP = L-cysteinyl-tRNA(Cys) + AMP + diphosphate. The protein is Cysteine--tRNA ligase of Histophilus somni (strain 129Pt) (Haemophilus somnus).